The primary structure comprises 101 residues: Small ribosomal subunit protein bS21 (101 aa).

Over residues 36–52 (YEKPSEKKAREKAEAVR) the composition is skewed to basic and acidic residues. The tract at residues 36–101 (YEKPSEKKAR…GPGAGPRGPR (66 aa)) is disordered. The segment covering 53 to 62 (RARKLARKKL) has biased composition (basic residues). Residues 83–101 (PGAGGPGAGGPGAGPRGPR) show a composition bias toward gly residues.

It belongs to the bacterial ribosomal protein bS21 family.

This chain is Small ribosomal subunit protein bS21, found in Rhodopseudomonas palustris (strain HaA2).